A 322-amino-acid chain; its full sequence is UDP-N-acetylenolpyruvoylglucosamine reductase (322 aa).

The FAD-binding PCMH-type domain maps to 36–202 (RAGGPAQVLF…TSVLFEGVPG (167 aa)). Arg182 is a catalytic residue. Ser231 acts as the Proton donor in catalysis. Glu301 is a catalytic residue.

This sequence belongs to the MurB family. It depends on FAD as a cofactor.

It localises to the cytoplasm. The enzyme catalyses UDP-N-acetyl-alpha-D-muramate + NADP(+) = UDP-N-acetyl-3-O-(1-carboxyvinyl)-alpha-D-glucosamine + NADPH + H(+). It participates in cell wall biogenesis; peptidoglycan biosynthesis. Functionally, cell wall formation. This chain is UDP-N-acetylenolpyruvoylglucosamine reductase, found in Brucella abortus (strain S19).